Consider the following 81-residue polypeptide: MSHSVKIYDTCIGCTQCVRACPTDVLEMIPWDGCKAKQIAPAPRTEDCVGCKRCESACPTDFLSVRVYLCHETTRSMGLAY.

2 consecutive 4Fe-4S ferredoxin-type domains span residues 2–31 (SHSV…MIPW) and 39–68 (IAPA…VRVY). Positions 11, 14, 17, 21, 48, 51, 54, and 58 each coordinate [4Fe-4S] cluster.

The eukaryotic PSI reaction center is composed of at least 11 subunits. [4Fe-4S] cluster is required as a cofactor.

Its subcellular location is the plastid. It localises to the chloroplast thylakoid membrane. The enzyme catalyses reduced [plastocyanin] + hnu + oxidized [2Fe-2S]-[ferredoxin] = oxidized [plastocyanin] + reduced [2Fe-2S]-[ferredoxin]. Apoprotein for the two 4Fe-4S centers FA and FB of photosystem I (PSI); essential for photochemical activity. FB is the terminal electron acceptor of PSI, donating electrons to ferredoxin. The C-terminus interacts with PsaA/B/D and helps assemble the protein into the PSI complex. Required for binding of PsaD and PsaE to PSI. PSI is a plastocyanin-ferredoxin oxidoreductase, converting photonic excitation into a charge separation, which transfers an electron from the donor P700 chlorophyll pair to the spectroscopically characterized acceptors A0, A1, FX, FA and FB in turn. This is Photosystem I iron-sulfur center from Drimys granadensis.